The following is a 463-amino-acid chain: MKKIILVGRPNVGKSSLFNRLAKQRIAITSDVSGTTRDTNKAEIFIDDKNCILIDSGGLDDSNELFKNVKINTLNEAKNADIIVFMVDGKNFPDEIDKRFFYELSNLNKPIALVVNKVDSKKDEERSWEFNEFGAKYIFNLSVSHNLGTDELRDWIYKLIPKSKIKADTSDDFDEFLDCVNEHGEMGLPSVDYETKNIKIGIIGRVNVGKSSLLNALVKEDRSVVSKIAGTTIDPVNESYVYEDRVFEFVDTAGIRKRGKIEGIERLALHRTEKILEEADIALLVLDASEPLTELDERIAGLGAKFELGLIIVLNKWDKDHGEFDKVVYELRDKFKFLAYAPIISVSALGGKRVHKLYPLILEVYKNYTQKMKTSRLNEVLEEAIRTHPIPRDHGKIVKIYYGVQFGFAPPKIALIMNKPRSLHFSYKRYLLNKLRENYELSGTPVILIPKNRSQKESTENEN.

EngA-type G domains are found at residues Lys-2 to Lys-164 and Ile-198 to Thr-369. GTP contacts are provided by residues Gly-8 to Ser-15, Asp-55 to Leu-59, Asn-116 to Asp-119, Gly-204 to Ser-211, Asp-251 to Ile-255, and Asn-315 to Asp-318. Residues Gln-370–Ser-454 enclose the KH-like domain.

The protein belongs to the TRAFAC class TrmE-Era-EngA-EngB-Septin-like GTPase superfamily. EngA (Der) GTPase family. In terms of assembly, associates with the 50S ribosomal subunit.

Its function is as follows. GTPase that plays an essential role in the late steps of ribosome biogenesis. The protein is GTPase Der of Campylobacter fetus subsp. fetus (strain 82-40).